The sequence spans 217 residues: ATP phosphoribosyltransferase (217 aa).

Belongs to the ATP phosphoribosyltransferase family. Short subfamily. Heteromultimer composed of HisG and HisZ subunits.

It localises to the cytoplasm. The catalysed reaction is 1-(5-phospho-beta-D-ribosyl)-ATP + diphosphate = 5-phospho-alpha-D-ribose 1-diphosphate + ATP. It functions in the pathway amino-acid biosynthesis; L-histidine biosynthesis; L-histidine from 5-phospho-alpha-D-ribose 1-diphosphate: step 1/9. Catalyzes the condensation of ATP and 5-phosphoribose 1-diphosphate to form N'-(5'-phosphoribosyl)-ATP (PR-ATP). Has a crucial role in the pathway because the rate of histidine biosynthesis seems to be controlled primarily by regulation of HisG enzymatic activity. This chain is ATP phosphoribosyltransferase (hisG), found in Neisseria meningitidis serogroup A / serotype 4A (strain DSM 15465 / Z2491).